The primary structure comprises 148 residues: Snaclec 8 (148 aa).

Positions 1 to 23 are cleaved as a signal peptide; it reads MGRFIFVSFSLLVVFFSLSGTEA. One can recognise a C-type lectin domain in the interval 34 to 148; sequence YDQNCYKAFE…DTQFRLQEPG (115 aa).

The protein belongs to the snaclec family. In terms of assembly, heterodimer; disulfide-linked. In terms of processing, contains disulfide bonds. In terms of tissue distribution, expressed by the venom gland.

Its subcellular location is the secreted. Functionally, interferes with one step of hemostasis (modulation of platelet aggregation, or coagulation cascade, for example). This Echis carinatus sochureki (Saw-scaled viper) protein is Snaclec 8.